A 146-amino-acid chain; its full sequence is Hemoglobin subunit beta-C (146 aa).

In terms of domain architecture, Globin spans 2-146 (EWTDFERATI…VVSSLGRQYH (145 aa)). 2 residues coordinate heme b: H63 and H92.

It belongs to the globin family. In terms of assembly, hbC is a heterotetramer of two alpha chains and two beta-C chains. In terms of tissue distribution, red blood cells.

In terms of biological role, involved in oxygen transport from gills to the various peripheral tissues. The chain is Hemoglobin subunit beta-C (hbbc) from Trematomus bernacchii (Emerald rockcod).